Here is a 907-residue protein sequence, read N- to C-terminus: Leucine-rich repeat-containing G-protein coupled receptor 5 (907 aa).

An N-terminal signal peptide occupies residues 1 to 21 (MDTSRVRMLLSLLALLQLVAA). Residues 22–561 (GSPPRPDTMP…EHLFGSWLIR (540 aa)) lie on the Extracellular side of the membrane. In terms of domain architecture, LRRNT spans 33–64 (GCPSYCHCELDGRMLLRVDCSDLGLSELPSNL). 2 cysteine pairs are disulfide-bonded: Cys34-Cys40 and Cys38-Cys52. 17 LRR repeats span residues 44-64 (GRMLLRVDCSDLGLSELPSNL), 65-88 (SVFTSYLDLSMNNISQLPASLLHR), 89-112 (LRFLEELRLAGNALTHIPKGAFAG), 114-136 (HSLKVLMLQNNQLRQVPEEALQN), 137-160 (LRSLQSLRLDANHISYVPPSCFSG), 162-184 (HSLRHLWLDDNALTDVPVQAFRS), 186-208 (SALQAMTLALNKIHHIADHAFGN), 209-232 (LSSLVVLHLHNNRIHSLGKKCFDG), 233-256 (LHSLETLDLNYNNLDEFPTAIKTL), 257-279 (SNLKELGFHSNNIRSIPERAFVG), 281-303 (PSLITIHFYDNPIQFVGISAFQH), 304-327 (LPELRTLTLNGASQITEFPDLTGT), 328-350 (ATLESLTLTGAKISSLPQTVCDQ), 351-375 (LPNLQVLDLSYNLLEDLPSLSGCQK), 377-396 (QKIDLRHNEIYEIKGGTFQQ), 397-420 (LFNLRSLNLARNKIAIIHPNAFST), and 422-444 (PSLIKLDLSSNLLSSFPVTGLHG). 2 N-linked (GlcNAc...) asparagine glycosylation sites follow: Asn63 and Asn77. Residue Asn208 is glycosylated (N-linked (GlcNAc...) asparagine). A disulfide bond links Cys348 and Cys373. A disulfide bridge connects residues Cys479 and Cys541. Residues 562–582 (IGVWTTAVLALSCNALVAFTV) form a helical membrane-spanning segment. An LRR 18 repeat occupies 564-585 (VWTTAVLALSCNALVAFTVFRT). At 583-595 (FRTPLYISSIKLL) the chain is on the cytoplasmic side. The chain crosses the membrane as a helical span at residues 596–616 (IGVIAVVDILMGVSSAILAVV). The Extracellular portion of the chain corresponds to 617 to 638 (DTFTFGSFAQHGAWWEGGIGCQ). The cysteines at positions 637 and 712 are disulfide-linked. Residues 639–659 (IVGFLSIFASESSVFLLTLAA) form a helical membrane-spanning segment. Over 660-682 (LERGFSVKCSSKFEMKAPLSSLK) the chain is Cytoplasmic. A helical membrane pass occupies residues 683–703 (AIILLCVLLALTIATVPLLGG). Residues 704 to 723 (SEYNASPLCLPLPFGEPSTT) are Extracellular-facing. A helical transmembrane segment spans residues 724–744 (GYMVALVLLNSLCFLIMTIAY). Topologically, residues 745 to 775 (TRLYCSLEKGELENLWDCSMVKHTALLLFTN) are cytoplasmic. Residues 776–796 (CILYCPVAFLSFSSLLNLTFI) form a helical membrane-spanning segment. The Extracellular segment spans residues 797–802 (SPEVIK). Residues 803-823 (FILLVIVPLPACLNPLLYIVF) form a helical membrane-spanning segment. Topologically, residues 824–907 (NPHFKEDMGS…LSSVAFVPCL (84 aa)) are cytoplasmic.

The protein belongs to the G-protein coupled receptor 1 family. As to quaternary structure, identified in a complex composed of RNF43, LGR5 and RSPO1. Also interacts with other R-spondin ligands, including RSPO2, RSPO3 and RSPO4.

It localises to the cell membrane. It is found in the golgi apparatus. The protein resides in the trans-Golgi network membrane. Functionally, receptor for R-spondins that potentiates the canonical Wnt signaling pathway and acts as a stem cell marker of the intestinal epithelium and the hair follicle. Upon binding to R-spondins (RSPO1, RSPO2, RSPO3 or RSPO4), associates with phosphorylated LRP6 and frizzled receptors that are activated by extracellular Wnt receptors, triggering the canonical Wnt signaling pathway to increase expression of target genes. In contrast to classical G-protein coupled receptors, does not activate heterotrimeric G-proteins to transduce the signal. Involved in the development and/or maintenance of the adult intestinal stem cells during postembryonic development. The chain is Leucine-rich repeat-containing G-protein coupled receptor 5 (Lgr5) from Rattus norvegicus (Rat).